The sequence spans 37 residues: Large ribosomal subunit protein bL36 (37 aa).

It belongs to the bacterial ribosomal protein bL36 family.

The protein is Large ribosomal subunit protein bL36 of Alkaliphilus metalliredigens (strain QYMF).